A 345-amino-acid polypeptide reads, in one-letter code: Arginase (345 aa).

Positions 1-16 are enriched in basic and acidic residues; it reads MKETAAAKFERQHMDS. The interval 1 to 34 is disordered; the sequence is MKETAAAKFERQHMDSPDLGTDDDDKMSPATSPF. 6 residues coordinate Mn(2+): I101, H124, S126, G128, I232, and C234.

Belongs to the arginase family. Homotrimer. Mn(2+) is required as a cofactor.

The enzyme catalyses L-arginine + H2O = urea + L-ornithine. The protein operates within nitrogen metabolism; urea cycle; L-ornithine and urea from L-arginine: step 1/1. Its activity is regulated as follows. The enzyme activity is increased in the range of 20-50% upon the addition of Mn(2+) (1 mM), Co(2+) (1 mM), Ni(2+) (1 and 5 mM) and K(+) (5 mM). In contrast, the addition of Cu(2+), Zn(2+), Ca(2+), Mg(2+), Fe(2+) (both 1 and 5 mM), and Co(2+) (5 mM) strongly suppresses the arginase activity. SDS (1%) and EDTA (1 mM) are the most potent inhibitors. Reducing agents DTT (1 mM), PMSF (1 mM) and beta-mercaptoethanol (1 mM) also significantly inhibit activity by 85%, 64% and 35%, respectively. Surfactants Triton X-100 (1%), Tween-80 (1%) and Tween-20 (1%) are more tolerant, showing a slight decrease of arginase activity in the range of 10-30%. Its function is as follows. Cold-active L-arginase that catalyzes the hydrolysis of L-arginine to L-ornithine and urea, an essential reaction in the urea cycle for toxic ammonia removal and cell proliferation. Is not able to use D-arginine or L-canavanine as substrates. The chain is Arginase from Glaciozyma antarctica (strain PI12) (Antarctic psychrophilic yeast).